Here is a 234-residue protein sequence, read N- to C-terminus: 2,3-bisphosphoglycerate-dependent phosphoglycerate mutase 1 (234 aa).

Substrate contacts are provided by residues 14–21 (RHGQSIWN), 27–28 (TG), R66, and 93–96 (ERHY). The active-site Tele-phosphohistidine intermediate is H15. E93 functions as the Proton donor/acceptor in the catalytic mechanism.

The protein belongs to the phosphoglycerate mutase family. BPG-dependent PGAM subfamily. Homodimer.

The enzyme catalyses (2R)-2-phosphoglycerate = (2R)-3-phosphoglycerate. The protein operates within carbohydrate degradation; glycolysis; pyruvate from D-glyceraldehyde 3-phosphate: step 3/5. Functionally, catalyzes the interconversion of 2-phosphoglycerate and 3-phosphoglycerate. In Nitrosomonas europaea (strain ATCC 19718 / CIP 103999 / KCTC 2705 / NBRC 14298), this protein is 2,3-bisphosphoglycerate-dependent phosphoglycerate mutase 1.